A 1705-amino-acid chain; its full sequence is ALK tyrosine kinase receptor (1705 aa).

Positions 1 to 21 are cleaved as a signal peptide; it reads MIARILYFFLWSAAFLPELQC. At 22–1035 the chain is on the extracellular side; sequence ASQRTADALT…SLSHLALGLS (1014 aa). N-linked (GlcNAc...) asparagine glycosylation is found at Asn40 and Asn48. A heparin-binding region region spans residues 54 to 76; the sequence is RIKRKTLSVDFAVPSLLRYYLAL. N-linked (GlcNAc...) asparagine glycans are attached at residues Asn124, Asn259, Asn334, Asn434, Asn442, Asn458, Asn484, Asn578, Asn590, and Asn635. The MAM domain occupies 486–644; that stretch reads SYCSFGREDC…NFTLSMECFL (159 aa). Residues Cys694 and Cys707 are joined by a disulfide bond. Residue Asn717 is glycosylated (N-linked (GlcNAc...) asparagine). Cysteines 788 and 799 form a disulfide. 2 N-linked (GlcNAc...) asparagine glycosylation sites follow: Asn808 and Asn881. The tract at residues 842-892 is disordered; it reads GGGRGYSSQSETPEEVMDRDPSIPGRNGKSGTAGGGGGWNDSAPVPQGGRP. A disulfide bridge links Cys903 with Cys921. Residue Asn979 is glycosylated (N-linked (GlcNAc...) asparagine). Intrachain disulfides connect Cys980/Cys988 and Cys983/Cys997. The tract at residues 980-1016 is EGF-like; sequence CSHCESGDCHETSEGMVCYCDEELTLAPDGVSCINST. Residue Asn1014 is glycosylated (N-linked (GlcNAc...) asparagine). The helical transmembrane segment at 1036–1056 threads the bilayer; that stretch reads VGTSALIAALLLAVSGVMIMY. Residues 1057–1705 are Cytoplasmic-facing; sequence RRKHTELQSI…KMEGHNATVL (649 aa). Residues 1113–1389 form the Protein kinase domain; it reads ISLTRGLGHG…IDYCLQDPDV (277 aa). ATP-binding positions include 1119 to 1127 and Lys1147; that span reads LGHGAFGEV. Residue Asp1246 is the Proton acceptor of the active site. Disordered regions lie at residues 1395-1499, 1505-1524, 1532-1557, 1588-1613, and 1646-1681; these read PVEY…GHVN, AHSS…WNPT, QQQK…GQEQ, QQQQ…PAPT, and GLPM…DSRP. Residues 1484–1493 show a composition bias toward polar residues; the sequence is KPSSTTSNAQ. 2 stretches are compositionally biased toward low complexity: residues 1532-1544 and 1588-1602; these read QQQK…AQRQ and QQQQ…LCRP. Positions 1603–1613 are enriched in pro residues; that stretch reads LLPPPPPPAPT.

Belongs to the protein kinase superfamily. Tyr protein kinase family. Insulin receptor subfamily. Homodimer; homodimerizes upon binding to alkal ligands (alkal1, alkal2a or alkal2b). Highly expressed in the developing central nervous system: highly expressed in brain, with much lower expression in heart, caudal fin and testis.

It is found in the cell membrane. The enzyme catalyses L-tyrosyl-[protein] + ATP = O-phospho-L-tyrosyl-[protein] + ADP + H(+). Its activity is regulated as follows. Inhibited by ALK inhibitor TAE684. Its function is as follows. Receptor tyrosine kinase required for neurogenesis in the developing central nervous system. Following activation by alkal ligands (alkal1, alkal2a or alkal2b) at the cell surface, transduces an extracellular signal into an intracellular response. Ligand-binding to the extracellular domain induces tyrosine kinase activation, resulting in the activation of the mitogen-activated protein kinase (MAPK) pathway. Phosphorylates almost exclusively at the first tyrosine of the Y-x-x-x-Y-Y motif. This Danio rerio (Zebrafish) protein is ALK tyrosine kinase receptor.